Reading from the N-terminus, the 461-residue chain is Armadillo repeat-containing X-linked protein 1 (461 aa).

The Mitochondrial intermembrane portion of the chain corresponds to 1–6 (MGRTRE). Mitochondrion outer membrane (MOM)-targeting sequence stretches follow at residues 1-6 (MGRTRE) and 26-36 (RLTWGKDENEK). Residues 7–29 (AGCVAAGMVIGAGACYCVYRLTW) traverse the membrane as a helical; Signal-anchor segment. The Cytoplasmic portion of the chain corresponds to 30-461 (GKDENEKLWD…VKVLKVLTKL (432 aa)). Disordered stretches follow at residues 34–110 (NEKL…HSEG) and 148–192 (SSLP…PATA). The segment covering 38–51 (WDDEDEEEEEEEES) has biased composition (acidic residues). Over residues 96 to 110 (PDVKKEVYPESHSEG) the composition is skewed to basic and acidic residues. Positions 167–185 (SRARNRTSGKVKRKNRSKS) are enriched in basic residues. ARM repeat units follow at residues 203–243 (PYKI…NNAA), 245–284 (SFNQ…NLSV), 366–406 (PAMT…NIND), and 423–461 (SSLF…LTKL).

The protein belongs to the eutherian X-chromosome-specific Armcx family. As to quaternary structure, interacts with MIRO1.

The protein resides in the mitochondrion. It localises to the mitochondrion outer membrane. In terms of biological role, regulates mitochondrial transport during axon regeneration. Increases the proportion of motile mitochondria by recruiting stationary mitochondria into the motile pool. Enhances mitochondria movement and neurite growth in both adult axons and embryonic neurons. Promotes neuronal survival and axon regeneration after nerve injury. May link mitochondria to the Trak1-kinesin motor complex via its interaction with MIRO1. The sequence is that of Armadillo repeat-containing X-linked protein 1 (Armcx1) from Rattus norvegicus (Rat).